The sequence spans 431 residues: Keratin, type I cytoskeletal 40 (431 aa).

Positions 1 to 89 are head; the sequence is MASEGSPDCC…CEEGTFNSNE (89 aa). The 312-residue stretch at 89–400 folds into the IF rod domain; that stretch reads EKETMQFLND…GLLEKEDSRL (312 aa). A coil 1A region spans residues 90 to 124; sequence KETMQFLNDRLASYLERVRSLEENNAELECRIREQ. A linker 1 region spans residues 125-135; the sequence is CEPDATPVCPD. Residues 136–236 form a coil 1B region; that stretch reads YQRYFDTIEE…HEEEVNLLRE (101 aa). A linker 12 region spans residues 237–252; sequence QLGDRLNVELDTAPTV. Positions 253–396 are coil 2; the sequence is DLNKVLDEMR…NTYRGLLEKE (144 aa). Residues 397 to 431 form a tail region; that stretch reads DSRLPCNPGSTASISNSACEPCSAYVICTVENCCA.

The protein belongs to the intermediate filament family. In terms of assembly, heterotetramer of two type I and two type II keratins.

May play a role in late hair differentiation. In Rattus norvegicus (Rat), this protein is Keratin, type I cytoskeletal 40 (Krt40).